The following is a 243-amino-acid chain: MTATLSLKPAATVRGLRKSYGTKEVLQGIDLTINCGEVTALIGRSGSGKSTILRVLAGLSKEHSGSVEISGNPAVAFQEPRLLPWKTVLDNVTFGLNRTDISWSEAQERASALLAEVKLPDSDAAWPLTLSGGQAQRVSLARALISEPELLLLDEPFGALDALTRLTAQDLLLKTVNTRNLGVLLVTHDVSEAIALADHVLLLDDGAITHSLTVDIPGDRRTHPSFASYTAQLLEWLEITTPA.

The region spanning 11–230 is the ABC transporter domain; it reads ATVRGLRKSY…RTHPSFASYT (220 aa). 43 to 50 contributes to the ATP binding site; sequence GRSGSGKS.

It belongs to the ABC transporter superfamily. Aliphatic sulfonates importer (TC 3.A.1.17.2) family. In terms of assembly, the complex is composed of two ATP-binding proteins (SsuB), two transmembrane proteins (SsuC) and a solute-binding protein (SsuA).

Its subcellular location is the cell membrane. It carries out the reaction ATP + H2O + aliphatic sulfonate-[sulfonate-binding protein]Side 1 = ADP + phosphate + aliphatic sulfonateSide 2 + [sulfonate-binding protein]Side 1.. In terms of biological role, part of the ABC transporter complex SsuABC involved in aliphatic sulfonates import. Responsible for energy coupling to the transport system. Is also involved in taurine transport. Seems to not be involved in long chain aliphatic sulfonates transport (chain length of eight carbon atoms or more). The protein is Aliphatic sulfonates import ATP-binding protein SsuB of Corynebacterium glutamicum (strain ATCC 13032 / DSM 20300 / JCM 1318 / BCRC 11384 / CCUG 27702 / LMG 3730 / NBRC 12168 / NCIMB 10025 / NRRL B-2784 / 534).